The sequence spans 116 residues: Cystatin (116 aa).

The Secondary area of contact motif lies at 53–57; that stretch reads QLVSG. 2 disulfides stabilise this stretch: Cys71–Cys81 and Cys95–Cys115. Position 80 is a phosphoserine (Ser80).

Belongs to the cystatin family.

The protein resides in the secreted. Its function is as follows. This protein binds tightly to and inhibits papain and cathepsin B. This Coturnix japonica (Japanese quail) protein is Cystatin.